The primary structure comprises 385 residues: Chorismate synthase (385 aa).

Positions 40 and 46 each coordinate NADP(+). FMN contacts are provided by residues 128–130 (RAS), 248–249 (QA), Gly-293, 308–312 (KAIPS), and Arg-334.

The protein belongs to the chorismate synthase family. As to quaternary structure, homotetramer. The cofactor is FMNH2.

The enzyme catalyses 5-O-(1-carboxyvinyl)-3-phosphoshikimate = chorismate + phosphate. It functions in the pathway metabolic intermediate biosynthesis; chorismate biosynthesis; chorismate from D-erythrose 4-phosphate and phosphoenolpyruvate: step 7/7. Catalyzes the anti-1,4-elimination of the C-3 phosphate and the C-6 proR hydrogen from 5-enolpyruvylshikimate-3-phosphate (EPSP) to yield chorismate, which is the branch point compound that serves as the starting substrate for the three terminal pathways of aromatic amino acid biosynthesis. This reaction introduces a second double bond into the aromatic ring system. The protein is Chorismate synthase of Endomicrobium trichonymphae.